The primary structure comprises 82 residues: MAFLLPFLCNCCNPMSLLCGGGCDLISCCCRGGGWQPMARQPIYPYGSPMGAHVYYPPPVAQPPVRGPVRVPQGERPVDGLR.

This is an uncharacterized protein from Ictalurid herpesvirus 1 (strain Auburn) (IcHV-1).